Consider the following 399-residue polypeptide: Probable sugar efflux transporter (399 aa).

A run of 12 helical transmembrane segments spans residues 15-35, 50-70, 81-101, 103-123, 136-156, 168-188, 209-229, 246-266, 273-293, 301-321, 333-353, and 364-384; these read VVTL…PVGL, VGMM…PFML, LIGL…AWSF, VLVI…SITS, AQAL…GIPI, MTFL…VKLL, PALV…YTAY, FATV…ILFG, ASGL…LLLP, LMLL…GMQV, VAMS…ALVG, and SIGY…LMIF.

This sequence belongs to the major facilitator superfamily. SotB (TC 2.A.1.2) family.

The protein resides in the cell inner membrane. In terms of biological role, involved in the efflux of sugars. The physiological role may be the reduction of the intracellular concentration of toxic sugars or sugar metabolites. In Klebsiella pneumoniae (strain 342), this protein is Probable sugar efflux transporter.